We begin with the raw amino-acid sequence, 37 residues long: Large ribosomal subunit protein bL36 (37 aa).

It belongs to the bacterial ribosomal protein bL36 family.

This Marinobacter nauticus (strain ATCC 700491 / DSM 11845 / VT8) (Marinobacter aquaeolei) protein is Large ribosomal subunit protein bL36.